We begin with the raw amino-acid sequence, 391 residues long: UPF0229 protein BCA_0588 (391 aa).

Over residues 1–16 (MGEENQPNYTISQENW) the composition is skewed to polar residues. 2 disordered regions span residues 1–31 (MGEE…RHQE) and 80–117 (HVGQ…GDAA). Basic and acidic residues predominate over residues 21-31 (KGYDDQQRHQE). The segment covering 98-115 (GSGGQKQKGPGKGQGAGD) has biased composition (gly residues).

It belongs to the UPF0229 family.

The chain is UPF0229 protein BCA_0588 from Bacillus cereus (strain 03BB102).